Here is a 122-residue protein sequence, read N- to C-terminus: Large ribosomal subunit protein uL14 (122 aa).

The protein belongs to the universal ribosomal protein uL14 family. Part of the 50S ribosomal subunit. Forms a cluster with proteins L3 and L19. In the 70S ribosome, L14 and L19 interact and together make contacts with the 16S rRNA in bridges B5 and B8.

Binds to 23S rRNA. Forms part of two intersubunit bridges in the 70S ribosome. The chain is Large ribosomal subunit protein uL14 from Clostridium tetani (strain Massachusetts / E88).